The chain runs to 972 residues: C-1-tetrahydrofolate synthase, mitochondrial (972 aa).

The transit peptide at 1 to 55 (MNVMVSFNQLRNYFLESNSLRPSKWLFQSYGTSSSANILNGKLLARKLQRSVAEE) directs the protein to the mitochondrion. A methylenetetrahydrofolate dehydrogenase and cyclohydrolase region spans residues 56 to 340 (VQALKAKDRN…DLNPLELKKP (285 aa)). Substrate is bound by residues 84–88 (YVRMK) and 131–133 (VQL). NADP(+)-binding positions include 202 to 204 (GRS) and Ser-227. Residue 299–303 (PGGVG) coordinates substrate. Residues 341-972 (VPSDIEIANS…CENGEIVGLS (632 aa)) form a formyltetrahydrofolate synthetase region. 405 to 412 (TPFGEGKS) lines the ATP pocket.

The protein in the N-terminal section; belongs to the tetrahydrofolate dehydrogenase/cyclohydrolase family. In the C-terminal section; belongs to the formate--tetrahydrofolate ligase family. Homodimer.

It is found in the mitochondrion. It carries out the reaction (6R)-5,10-methylene-5,6,7,8-tetrahydrofolate + NADP(+) = (6R)-5,10-methenyltetrahydrofolate + NADPH. The catalysed reaction is (6R)-5,10-methenyltetrahydrofolate + H2O = (6R)-10-formyltetrahydrofolate + H(+). It catalyses the reaction (6S)-5,6,7,8-tetrahydrofolate + formate + ATP = (6R)-10-formyltetrahydrofolate + ADP + phosphate. The protein operates within one-carbon metabolism; tetrahydrofolate interconversion. Mitochondrial isozyme of C-1-tetrahydrofolate synthase. The trifunctional enzyme catalyzes the interconversion of the one-carbon derivatives of tetrahydrofolate (THF) between different oxidation states by the enzymatic activities 10-formyltetrahydrofolate synthetase, 5,lO-methenyltetrahydrofolate cyclohydrolase, and 5,lO-methylenetetrahydrofolate dehydrogenase. In Schizosaccharomyces pombe (strain 972 / ATCC 24843) (Fission yeast), this protein is C-1-tetrahydrofolate synthase, mitochondrial (ade9).